A 939-amino-acid polypeptide reads, in one-letter code: Valine--tRNA ligase (939 aa).

The short motif at 47 to 57 is the 'HIGH' region element; that stretch reads PNVTGILHMGH. The 'KMSKS' region motif lies at 563-567; sequence KLSKS. An ATP-binding site is contributed by lysine 566. A coiled-coil region spans residues 874–939; sequence EHLAKERVRL…QSILDKLASL (66 aa).

The protein belongs to the class-I aminoacyl-tRNA synthetase family. ValS type 1 subfamily. Monomer.

It is found in the cytoplasm. It carries out the reaction tRNA(Val) + L-valine + ATP = L-valyl-tRNA(Val) + AMP + diphosphate. Its function is as follows. Catalyzes the attachment of valine to tRNA(Val). As ValRS can inadvertently accommodate and process structurally similar amino acids such as threonine, to avoid such errors, it has a 'posttransfer' editing activity that hydrolyzes mischarged Thr-tRNA(Val) in a tRNA-dependent manner. This is Valine--tRNA ligase from Chlamydia trachomatis serovar L2b (strain UCH-1/proctitis).